Here is a 124-residue protein sequence, read N- to C-terminus: Fluoride-specific ion channel FluC (124 aa).

A run of 4 helical transmembrane segments spans residues 5 to 25 (ILAVSAAGIAGTLLRFAAGTW), 38 to 58 (TLAVNLVGCLIIGLLYGWFLL), 69 to 89 (GLIVGFVGGLTTFSSFSLDTL), and 97 to 117 (ALIAFGYLGISVFGGLLATWA). Residues glycine 76 and threonine 79 each coordinate Na(+).

It belongs to the fluoride channel Fluc/FEX (TC 1.A.43) family.

The protein localises to the cell inner membrane. The enzyme catalyses fluoride(in) = fluoride(out). Its activity is regulated as follows. Na(+) is not transported, but it plays an essential structural role and its presence is essential for fluoride channel function. Fluoride-specific ion channel. Important for reducing fluoride concentration in the cell, thus reducing its toxicity. In Pseudomonas fluorescens (strain SBW25), this protein is Fluoride-specific ion channel FluC.